The following is a 31-amino-acid chain: Beta-endorphin (31 aa).

The protein belongs to the POMC family.

It localises to the secreted. In terms of biological role, beta-endorphin and Met-enkephalin are endogenous opiates. This Camelus dromedarius (Dromedary) protein is Beta-endorphin (POMC).